Consider the following 336-residue polypeptide: ATP-dependent 6-phosphofructokinase (336 aa).

Gly11 provides a ligand contact to ATP. Position 21 to 25 (21 to 25 (RAVVR)) interacts with ADP. ATP is bound by residues 72–73 (RY) and 102–105 (GDGS). Residue Asp103 participates in Mg(2+) binding. Substrate is bound at residue 125-127 (TID). Residue Asp127 is the Proton acceptor of the active site. Arg154 contributes to the ADP binding site. Residues Arg162 and 169 to 171 (MGR) each bind substrate. Residues 185 to 187 (GAD), Lys211, and 213 to 215 (KKH) each bind ADP. Residues Glu222, Arg244, and 250 to 253 (HIQR) each bind substrate.

Belongs to the phosphofructokinase type A (PFKA) family. ATP-dependent PFK group I subfamily. Prokaryotic clade 'B1' sub-subfamily. As to quaternary structure, homotetramer. It depends on Mg(2+) as a cofactor.

Its subcellular location is the cytoplasm. It carries out the reaction beta-D-fructose 6-phosphate + ATP = beta-D-fructose 1,6-bisphosphate + ADP + H(+). The protein operates within carbohydrate degradation; glycolysis; D-glyceraldehyde 3-phosphate and glycerone phosphate from D-glucose: step 3/4. With respect to regulation, allosterically activated by ADP and other diphosphonucleosides, and allosterically inhibited by phosphoenolpyruvate. In terms of biological role, catalyzes the phosphorylation of D-fructose 6-phosphate to fructose 1,6-bisphosphate by ATP, the first committing step of glycolysis. The polypeptide is ATP-dependent 6-phosphofructokinase (Streptococcus sanguinis (strain SK36)).